A 617-amino-acid polypeptide reads, in one-letter code: Regulatory solute carrier protein family 1 member 1 (617 aa).

The segment covering 1–22 (MSSLPTSDGFNHPARSSGQSPD) has biased composition (polar residues). Disordered stretches follow at residues 1-106 (MSSL…EITV), 155-181 (ENQN…VAQQ), and 217-237 (KGNG…IPSS). Basic and acidic residues-rich tracts occupy residues 43–52 (SDSDRIEPKA) and 66–83 (SEKK…HASS). 2 stretches are compositionally biased toward polar residues: residues 89 to 103 (TDQS…SSEE) and 155 to 165 (ENQNLSQVSDP). The segment at 410-412 (QCP) is involved in post-transcriptional down-regulation of SLC5A1. The 41-residue stretch at 571-611 (IFPATDIDRILRAGFTLQEALGALHRVGGNADLALLVLLAK) folds into the UBA domain.

As to quaternary structure, interacts with YRDC. In terms of tissue distribution, expressed in small intestine, kidney and brain.

It localises to the cell membrane. The protein localises to the nucleus. Its subcellular location is the golgi apparatus. The protein resides in the trans-Golgi network. Its function is as follows. Mediates transcriptional and post-transcriptional regulation of SLC5A1. Inhibits a dynamin and PKC-dependent exocytotic pathway of SLC5A1. Also involved in transcriptional regulation of SLC22A2. Exhibits glucose-dependent, short-term inhibition of SLC5A1 and SLC22A2 by inhibiting the release of vesicles from the trans-Golgi network. The protein is Regulatory solute carrier protein family 1 member 1 (RSC1A1) of Homo sapiens (Human).